The following is a 415-amino-acid chain: Dynein assembly factor with WD repeat domains 1 (415 aa).

WD repeat units lie at residues 90 to 129 (AHIL…ELNT), 132 to 174 (GHRN…HTFR), 175 to 214 (GHTA…EVYT), 217 to 256 (GHSA…KVNI), 259 to 298 (GHCA…CVAT), 301 to 340 (GHDD…CIAK), 343 to 384 (GHEG…QVLE), and 386 to 415 (HTDE…RIWR).

This sequence belongs to the WD repeat WDR69 family. In terms of assembly, interacts with IFT46.

Its subcellular location is the cytoplasm. It localises to the cytoskeleton. It is found in the flagellum basal body. The protein localises to the flagellum axoneme. In terms of biological role, required for axonemal dynein assembly and ciliary motility in ciliated organs, including Kupffer's vesicle, during embryogenesis. Facilitates the onset of robust cilia motility during development. This Homo sapiens (Human) protein is Dynein assembly factor with WD repeat domains 1.